A 512-amino-acid chain; its full sequence is NADH-quinone oxidoreductase subunit N (512 aa).

Helical transmembrane passes span 32–52 (VLPALVLATGGVFLICLSVLF), 57–77 (FIIVRYVSGLILLLAFAAVFY), 97–117 (VLSFWLNLIYISMAIGTAAIV), 126–146 (IEFPEFYPLLLFATCGMTLMT), 151–171 (FILVFVALELMSICLYILIGM), 186–206 (FLLGSFSSGFMLMGIAFLFGG), 231–251 (IGLVLFITGVAFKIALFPYHA), 264–284 (VTGYMSTAAKAASIGLLLILY), 296–316 (WAWLPGILALCSMIYGNLLAL), 324–344 (MLAYSSIAHAGYVVAGISAGI), 348–368 (VLFYLIVYSFMSLGAFAILAY), 392–412 (AIAINIFFMSLAGVPPFGGFW), 431–451 (ILLIGGVTNSALALYYYLRIG), and 473–493 (VGVTGVVLFCLLMVSVGWFLL).

The protein belongs to the complex I subunit 2 family. NDH-1 is composed of 14 different subunits. Subunits NuoA, H, J, K, L, M, N constitute the membrane sector of the complex.

Its subcellular location is the cell inner membrane. The enzyme catalyses a quinone + NADH + 5 H(+)(in) = a quinol + NAD(+) + 4 H(+)(out). Its function is as follows. NDH-1 shuttles electrons from NADH, via FMN and iron-sulfur (Fe-S) centers, to quinones in the respiratory chain. The immediate electron acceptor for the enzyme in this species is believed to be ubiquinone. Couples the redox reaction to proton translocation (for every two electrons transferred, four hydrogen ions are translocated across the cytoplasmic membrane), and thus conserves the redox energy in a proton gradient. In Leptospira interrogans serogroup Icterohaemorrhagiae serovar Lai (strain 56601), this protein is NADH-quinone oxidoreductase subunit N.